We begin with the raw amino-acid sequence, 77 residues long: Conotoxin VnMEKL-0111 (77 aa).

An N-terminal signal peptide occupies residues 1-19 (MEKLTILLLVAAVLMSTQA). Positions 20 to 46 (LIQHDGEKSQKAKMKFLTARTLSAKTR) are excised as a propeptide. Disulfide bonds link Cys-50-Cys-66, Cys-57-Cys-71, and Cys-65-Cys-75.

It belongs to the conotoxin O2 superfamily. In terms of tissue distribution, expressed by the venom duct.

The protein localises to the secreted. The protein is Conotoxin VnMEKL-0111 of Conus ventricosus (Mediterranean cone).